The sequence spans 229 residues: Non-structural protein P8 (229 aa).

Positions 13-31 are enriched in basic and acidic residues; sequence KMKHNQDRVEEPSQVRVDD. The tract at residues 13-46 is disordered; it reads KMKHNQDRVEEPSQVRVDDTISQPPRYAPSAPMP. Residues 36–46 are compositionally biased toward low complexity; the sequence is PPRYAPSAPMP. A run of 2 helical transmembrane segments spans residues 119-139 and 162-182; these read IIHT…VCTL and SLNP…MVCA.

This sequence belongs to the orbivirus NS3 family. Forms homooligomers via coiled-coil motif. Interacts with host OPTN; this interaction inhibits innate immune response.

The protein localises to the host cell membrane. Its subcellular location is the host Golgi apparatus. Plays a role in the inhibition of host innate immune response. Interacts with host OPTN and thus inhibits the recruitment of TBK1 to the host Golgi apparatus. In turn, downstream partner IRF3 cannot be activated and IFN-beta production is impaired. In terms of biological role, facilitates viral particle release either by increasing plasma membrane permeability through a viroporin-like activity or by viral budding. This Antilocapra americana (Pronghorn) protein is Non-structural protein P8 (Segment-10).